Here is a 136-residue protein sequence, read N- to C-terminus: ATP synthase epsilon chain (136 aa).

The segment at 112-136 (GNSADKLKAKESLNKARARSQAVGE) is disordered. Residues 116 to 125 (DKLKAKESLN) are compositionally biased toward basic and acidic residues.

The protein belongs to the ATPase epsilon chain family. In terms of assembly, F-type ATPases have 2 components, CF(1) - the catalytic core - and CF(0) - the membrane proton channel. CF(1) has five subunits: alpha(3), beta(3), gamma(1), delta(1), epsilon(1). CF(0) has three main subunits: a, b and c.

It localises to the cellular thylakoid membrane. Its function is as follows. Produces ATP from ADP in the presence of a proton gradient across the membrane. The polypeptide is ATP synthase epsilon chain (Prochlorococcus marinus (strain SARG / CCMP1375 / SS120)).